The primary structure comprises 308 residues: Ribonuclease Z (308 aa).

7 residues coordinate Zn(2+): His-61, His-63, Asp-65, His-66, His-139, Asp-210, and His-268. Asp-65 serves as the catalytic Proton acceptor.

It belongs to the RNase Z family. Homodimer. The cofactor is Zn(2+).

The enzyme catalyses Endonucleolytic cleavage of RNA, removing extra 3' nucleotides from tRNA precursor, generating 3' termini of tRNAs. A 3'-hydroxy group is left at the tRNA terminus and a 5'-phosphoryl group is left at the trailer molecule.. In terms of biological role, zinc phosphodiesterase, which displays some tRNA 3'-processing endonuclease activity. Probably involved in tRNA maturation, by removing a 3'-trailer from precursor tRNA. This Halobacterium salinarum (strain ATCC 700922 / JCM 11081 / NRC-1) (Halobacterium halobium) protein is Ribonuclease Z.